We begin with the raw amino-acid sequence, 298 residues long: Octopine catabolism/uptake operon regulatory protein OccR (298 aa).

One can recognise an HTH lysR-type domain in the interval 1–58 (MNLRQVEAFRAVMLTGQMTAAAELMLVTQPAISRLIKDFEQATKLQLFERRGNHIIPT). A DNA-binding region (H-T-H motif) is located at residues 18–37 (MTAAAELMLVTQPAISRLIK).

It belongs to the LysR transcriptional regulatory family.

Functionally, positive regulatory protein for the occ operon involved in octopine catabolism and uptake. Also acts as a negative regulator of its expression. The chain is Octopine catabolism/uptake operon regulatory protein OccR (occR) from Agrobacterium tumefaciens (strain Ach5).